Consider the following 261-residue polypeptide: Imidazole glycerol phosphate synthase subunit HisF (261 aa).

Catalysis depends on residues Asp16 and Asp135.

Belongs to the HisA/HisF family. In terms of assembly, heterodimer of HisH and HisF.

The protein localises to the cytoplasm. It catalyses the reaction 5-[(5-phospho-1-deoxy-D-ribulos-1-ylimino)methylamino]-1-(5-phospho-beta-D-ribosyl)imidazole-4-carboxamide + L-glutamine = D-erythro-1-(imidazol-4-yl)glycerol 3-phosphate + 5-amino-1-(5-phospho-beta-D-ribosyl)imidazole-4-carboxamide + L-glutamate + H(+). The protein operates within amino-acid biosynthesis; L-histidine biosynthesis; L-histidine from 5-phospho-alpha-D-ribose 1-diphosphate: step 5/9. In terms of biological role, IGPS catalyzes the conversion of PRFAR and glutamine to IGP, AICAR and glutamate. The HisF subunit catalyzes the cyclization activity that produces IGP and AICAR from PRFAR using the ammonia provided by the HisH subunit. In Mycolicibacterium smegmatis (strain ATCC 700084 / mc(2)155) (Mycobacterium smegmatis), this protein is Imidazole glycerol phosphate synthase subunit HisF.